The chain runs to 1688 residues: Voltage-dependent L-type calcium channel subunit alpha-1S (1688 aa).

The disordered stretch occupies residues 1–24 (MDAMGSAAEEGTQKKKRRPLVPPP). Over 1 to 51 (MDAMGSAAEEGTQKKKRRPLVPPPPRPPRALFCLGLQNPFRKFCINIVEWK) the chain is Cytoplasmic. One copy of the I repeat lies at 38 to 335 (NPFRKFCINI…LVLGVLSGEF (298 aa)). The chain crosses the membrane as a helical span at residues 52-70 (PFEMIILLTIFANCVALAI). The Extracellular portion of the chain corresponds to 71–88 (FLPMPEDDTNSTNSVLEK). N-linked (GlcNAc...) asparagine glycosylation is present at Asn80. Residues 89 to 108 (VEYIFLFIFTIESFLKIVAY) form a helical membrane-spanning segment. Residues 109–120 (GFILHTDAYLRN) lie on the Cytoplasmic side of the membrane. A helical transmembrane segment spans residues 121-139 (GWNILDFTIVSVGVFSVLL). Residues 140-158 (EQISKLQGLPAPGKSSGFN) are Extracellular-facing. The chain crosses the membrane as a helical span at residues 159–177 (VKALRAFRVLRPLRLVSGV). Topologically, residues 178–196 (PSLQVVLNSIIKAMIPLLH) are cytoplasmic. The chain crosses the membrane as a helical span at residues 197–216 (IALLVLFMIIIYAIVGLELF). Residues 217-307 (SGKMHKTCYF…WVNDAIGNEW (91 aa)) lie on the Extracellular side of the membrane. N-linked (GlcNAc...) asparagine glycosylation occurs at Asn255. Glu290 lines the Ca(2+) pocket. A helical transmembrane segment spans residues 308-332 (PWIYFVSLILLGSFFVLNLVLGVLS). At 333–431 (GEFTKEREKA…RKSRDLVKSR (99 aa)) the chain is on the cytoplasmic side. Residues 355-372 (QAMDEDLRGYLDWITHAE) form a binding to the beta subunit region. The II repeat unit spans residues 417–663 (HRLLRRKSRD…VFLAIAVDNL (247 aa)). Residues 432-450 (FFYWLVIIIILLNTVIIAT) form a helical membrane-spanning segment. Over 451–465 (EHHHQPDSLTKAQDI) the chain is Extracellular. A helical membrane pass occupies residues 466-485 (ANEVLLALFTMEMIVKIYAL). Topologically, residues 486–493 (GFQSYFMS) are cytoplasmic. Residues 494–512 (LFNRFDSFVVCTGLLEVML) traverse the membrane as a helical segment. Residues 513–522 (VASDIMSPLG) are Extracellular-facing. Residues 523–541 (ISVLRCIRLLRIFKITRYW) traverse the membrane as a helical segment. The Cytoplasmic portion of the chain corresponds to 542-560 (TSLNNLVASLLNSVRSIAS). The chain crosses the membrane as a helical span at residues 561-580 (LLLLLFLFMIIFALLGMQMF). Residues 581 to 635 (GGKFDFEDLEVRRSTFDTFPQALITVFQILTGEDWTAVMYNGIMAYGGPTYSGMS) are Extracellular-facing. Ca(2+) is bound at residue Glu613. Residues 636–660 (VCIYFIILFVCGNYILLNVFLAIAV) form a helical membrane-spanning segment. Residues 661–797 (DNLAEAENLT…VLCHRIINAT (137 aa)) are Cytoplasmic-facing. Disordered stretches follow at residues 672 to 696 (AQKA…TEEE) and 729 to 755 (EIKD…ISPR). Residues 740–749 (PGDDEEEEPE) are compositionally biased toward acidic residues. Residues 784–1066 (NKIRVLCHRI…IFVGFVIVTF (283 aa)) form an III repeat. Residues 798-816 (TFTNFILLFILLSSISLAA) form a helical membrane-spanning segment. At 817 to 832 (EDPIQPESFRNKVLSK) the chain is on the extracellular side. Residues 833–852 (LDIVFTVIFTTEIVLKMTAY) traverse the membrane as a helical segment. Topologically, residues 853–864 (GAFLHKGSFCRN) are cytoplasmic. Residues 865-883 (SFNILDLSVVGVSLISMGI) form a helical membrane-spanning segment. Residues 884–890 (ESSAISV) lie on the Extracellular side of the membrane. The chain crosses the membrane as a helical span at residues 891-909 (VKILRVLRVLRPLRAINRA). Over 910–928 (KGLKHVVQCLFVAIKTIGN) the chain is Cytoplasmic. A helical transmembrane segment spans residues 929-948 (IVLVTTLLQFMFSCIGVQLF). Over 949-1038 (KGKFYSCTDT…MGPIYNYRIE (90 aa)) the chain is Extracellular. The dihydropyridine binding stretch occupies residues 986 to 1075 (RVWSHSDFHF…FQEQGEQEYK (90 aa)). Position 1012 (Glu1012) interacts with Ca(2+). A helical membrane pass occupies residues 1039 to 1063 (IAVFFIVYIILIAFFMMNIFVGFVI). The Cytoplasmic portion of the chain corresponds to 1064–1116 (VTFQEQGEQEYKDCELDKNQRQCVQYALKARPLRRYIPKNPHQYKIWYVVTSS). The stretch at 1103 to 1371 (NPHQYKIWYV…LFVAVIMDNF (269 aa)) is one IV repeat. The chain crosses the membrane as a helical span at residues 1117 to 1135 (YFEYLMFFLITLNTISLGM). The Extracellular portion of the chain corresponds to 1136–1150 (QHYGQTAEFSYMSDI). The chain crosses the membrane as a helical span at residues 1151-1170 (LNVAFTGIFTVEMFLKLAAF). Topologically, residues 1171-1178 (KAKGYFGD) are cytoplasmic. The chain crosses the membrane as a helical span at residues 1179-1197 (PWNVFDFLIVIGSVIDVIL). At 1198 to 1218 (SEIDTPGIPATPGAEESSRIS) the chain is on the extracellular side. The helical transmembrane segment at 1219-1237 (ITFFRLFRVLRLVKLLSRG) threads the bilayer. Over 1238-1256 (EGVRTLLWTFIKSFQALPY) the chain is Cytoplasmic. The chain crosses the membrane as a helical span at residues 1257–1276 (VALLIVMLFFIYAVIGMQVF). The Extracellular segment spans residues 1277-1343 (GKIALVDGTH…GEEYTCGTSF (67 aa)). The segment at 1324–1390 (LCDPMSDFQP…LGPHHLDEFK (67 aa)) is dihydropyridine binding. Residues 1336–1379 (EYTCGTSFAYFYFISFYMLCAFLIINLFVAVIMDNFDYLTRDWS) form a phenylalkylamine binding region. A helical membrane pass occupies residues 1344-1368 (AYFYFISFYMLCAFLIINLFVAVIM). The Cytoplasmic portion of the chain corresponds to 1369–1688 (DNFDYLTRDW…TNSSISQATN (320 aa)). Disordered regions lie at residues 1635–1664 (PEPV…RLTT) and 1669–1688 (RVQQ…QATN). Over residues 1678–1688 (DTNSSISQATN) the composition is skewed to polar residues.

The protein belongs to the calcium channel alpha-1 subunit (TC 1.A.1.11) family. Multisubunit complex consisting of alpha-1, alpha-2, beta and delta subunits in a 1:1:1:1 ratio. The channel activity is directed by the pore-forming and voltage-sensitive alpha-1 subunit. In many cases, this subunit is sufficient to generate voltage-sensitive calcium channel activity. The auxiliary subunits beta and alpha-2/delta linked by a disulfide bridge regulate the channel activity. An additional gamma subunit is present only in skeletal muscle L-type channel. Post-translationally, phosphorylation by PKA stimulates the calcium channel function. As to expression, skeletal muscle specific.

Its subcellular location is the membrane. Voltage-sensitive calcium channels (VSCC) mediate the entry of calcium ions into excitable cells and are also involved in a variety of calcium-dependent processes, including muscle contraction, gene expression, cell motility, cell division and cell death. The isoform alpha-1S gives rise to L-type calcium currents. Long-lasting (L-type) calcium channels belong to the 'high-voltage activated' (HVA) group. They are blocked by dihydropyridines (DHP), phenylalkylamines, and by benzothiazepines. Calcium channels containing the alpha-1S subunit play an important role in excitation-contraction coupling in skele|tal muscle. In Aquarana catesbeiana (American bullfrog), this protein is Voltage-dependent L-type calcium channel subunit alpha-1S.